The following is a 500-amino-acid chain: Lycopene beta cyclase, chloroplastic (500 aa).

The transit peptide at 1 to 81 (MDTLLKTPNN…ELPMYDPSKG (81 aa)) directs the protein to the chloroplast. 86–114 (LAVVGGGPAGLAVAQQVSEAGLSVCSIDP) contributes to the NAD(+) binding site.

This sequence belongs to the lycopene cyclase family.

The protein localises to the plastid. Its subcellular location is the chloroplast. The catalysed reaction is a carotenoid psi-end group = a carotenoid beta-end derivative. The protein operates within carotenoid biosynthesis; beta-carotene biosynthesis. It participates in carotenoid biosynthesis; beta-zeacarotene biosynthesis. Its function is as follows. Catalyzes the double cyclization reaction which converts lycopene to beta-carotene and neurosporene to beta-zeacarotene. The protein is Lycopene beta cyclase, chloroplastic (LCY1) of Solanum lycopersicum (Tomato).